Here is a 447-residue protein sequence, read N- to C-terminus: UPF0210 protein lp_2507 (447 aa).

This sequence belongs to the UPF0210 family. As to quaternary structure, homodimer.

The sequence is that of UPF0210 protein lp_2507 from Lactiplantibacillus plantarum (strain ATCC BAA-793 / NCIMB 8826 / WCFS1) (Lactobacillus plantarum).